Consider the following 447-residue polypeptide: Tubulin beta chain (447 aa).

Positions 11, 69, 138, 142, 143, 144, 204, and 226 each coordinate GTP. Glu-69 provides a ligand contact to Mg(2+).

Belongs to the tubulin family. In terms of assembly, dimer of alpha and beta chains. A typical microtubule is a hollow water-filled tube with an outer diameter of 25 nm and an inner diameter of 15 nM. Alpha-beta heterodimers associate head-to-tail to form protofilaments running lengthwise along the microtubule wall with the beta-tubulin subunit facing the microtubule plus end conferring a structural polarity. Microtubules usually have 13 protofilaments but different protofilament numbers can be found in some organisms and specialized cells. Mg(2+) serves as cofactor.

It localises to the cytoplasm. It is found in the cytoskeleton. Functionally, tubulin is the major constituent of microtubules, a cylinder consisting of laterally associated linear protofilaments composed of alpha- and beta-tubulin heterodimers. Microtubules grow by the addition of GTP-tubulin dimers to the microtubule end, where a stabilizing cap forms. Below the cap, tubulin dimers are in GDP-bound state, owing to GTPase activity of alpha-tubulin. This chain is Tubulin beta chain, found in Trichophyton rubrum (Athlete's foot fungus).